The chain runs to 576 residues: Adenine deaminase (576 aa).

It belongs to the metallo-dependent hydrolases superfamily. Adenine deaminase family. Mn(2+) serves as cofactor.

The enzyme catalyses adenine + H2O + H(+) = hypoxanthine + NH4(+). The chain is Adenine deaminase from Bacillus pumilus (strain SAFR-032).